We begin with the raw amino-acid sequence, 173 residues long: MDVRFPIGKLQVPEKVTIEDIHEWLKQIETYTNRLGETVNSLNDEELSKTYREGSWDIRQLVHHIADSQLNMYQRLKLALTDESPTVPAFDQEKWAIQPDTNLPVETSIKMLEGINERIVSLGYRLTEEQLDQSFVHQINGEISVASKVAKLAWHEEHHLAHIKIALSNNSGS.

Histidine 64, histidine 155, and histidine 159 together coordinate Zn(2+).

Belongs to the metal hydrolase YfiT family. Homodimer. Zn(2+) serves as cofactor.

It localises to the cytoplasm. In terms of biological role, possible metal-dependent hydrolase. This Oceanobacillus iheyensis (strain DSM 14371 / CIP 107618 / JCM 11309 / KCTC 3954 / HTE831) protein is Putative metal-dependent hydrolase OB0413.